The primary structure comprises 208 residues: Thymidylate kinase (208 aa).

10-17 (GPEGSGKT) lines the ATP pocket.

The protein belongs to the thymidylate kinase family.

The catalysed reaction is dTMP + ATP = dTDP + ADP. Phosphorylation of dTMP to form dTDP in both de novo and salvage pathways of dTTP synthesis. The sequence is that of Thymidylate kinase from Bacillus cereus (strain ATCC 14579 / DSM 31 / CCUG 7414 / JCM 2152 / NBRC 15305 / NCIMB 9373 / NCTC 2599 / NRRL B-3711).